A 556-amino-acid polypeptide reads, in one-letter code: 2-succinyl-5-enolpyruvyl-6-hydroxy-3-cyclohexene-1-carboxylate synthase (556 aa).

It belongs to the TPP enzyme family. MenD subfamily. Homodimer. The cofactor is Mg(2+). Requires Mn(2+) as cofactor. Thiamine diphosphate is required as a cofactor.

It catalyses the reaction isochorismate + 2-oxoglutarate + H(+) = 5-enolpyruvoyl-6-hydroxy-2-succinyl-cyclohex-3-ene-1-carboxylate + CO2. It functions in the pathway quinol/quinone metabolism; 1,4-dihydroxy-2-naphthoate biosynthesis; 1,4-dihydroxy-2-naphthoate from chorismate: step 2/7. It participates in quinol/quinone metabolism; menaquinone biosynthesis. Catalyzes the thiamine diphosphate-dependent decarboxylation of 2-oxoglutarate and the subsequent addition of the resulting succinic semialdehyde-thiamine pyrophosphate anion to isochorismate to yield 2-succinyl-5-enolpyruvyl-6-hydroxy-3-cyclohexene-1-carboxylate (SEPHCHC). The chain is 2-succinyl-5-enolpyruvyl-6-hydroxy-3-cyclohexene-1-carboxylate synthase from Saccharopolyspora erythraea (strain ATCC 11635 / DSM 40517 / JCM 4748 / NBRC 13426 / NCIMB 8594 / NRRL 2338).